Consider the following 142-residue polypeptide: Large ribosomal subunit protein uL13 (142 aa).

The protein belongs to the universal ribosomal protein uL13 family. As to quaternary structure, part of the 50S ribosomal subunit.

This protein is one of the early assembly proteins of the 50S ribosomal subunit, although it is not seen to bind rRNA by itself. It is important during the early stages of 50S assembly. This chain is Large ribosomal subunit protein uL13, found in Syntrophobacter fumaroxidans (strain DSM 10017 / MPOB).